We begin with the raw amino-acid sequence, 351 residues long: UDP-3-O-acylglucosamine N-acyltransferase (351 aa).

Catalysis depends on His-257, which acts as the Proton acceptor.

This sequence belongs to the transferase hexapeptide repeat family. LpxD subfamily. Homotrimer.

It carries out the reaction a UDP-3-O-[(3R)-3-hydroxyacyl]-alpha-D-glucosamine + a (3R)-hydroxyacyl-[ACP] = a UDP-2-N,3-O-bis[(3R)-3-hydroxyacyl]-alpha-D-glucosamine + holo-[ACP] + H(+). Its pathway is bacterial outer membrane biogenesis; LPS lipid A biosynthesis. Catalyzes the N-acylation of UDP-3-O-acylglucosamine using 3-hydroxyacyl-ACP as the acyl donor. Is involved in the biosynthesis of lipid A, a phosphorylated glycolipid that anchors the lipopolysaccharide to the outer membrane of the cell. This is UDP-3-O-acylglucosamine N-acyltransferase from Methylorubrum extorquens (strain PA1) (Methylobacterium extorquens).